A 177-amino-acid polypeptide reads, in one-letter code: Large ribosomal subunit protein uL10 (177 aa).

Belongs to the universal ribosomal protein uL10 family. Part of the ribosomal stalk of the 50S ribosomal subunit. The N-terminus interacts with L11 and the large rRNA to form the base of the stalk. The C-terminus forms an elongated spine to which L12 dimers bind in a sequential fashion forming a multimeric L10(L12)X complex.

In terms of biological role, forms part of the ribosomal stalk, playing a central role in the interaction of the ribosome with GTP-bound translation factors. This chain is Large ribosomal subunit protein uL10, found in Legionella pneumophila (strain Corby).